Consider the following 379-residue polypeptide: Homoserine O-succinyltransferase (379 aa).

The region spanning 48 to 357 is the AB hydrolase-1 domain; the sequence is NAVLICHALS…SAHGHDAFLM (310 aa). The active-site Nucleophile is Ser154. Arg224 is a substrate binding site. Residues Asp319 and His352 contribute to the active site. Asp353 is a binding site for substrate.

This sequence belongs to the AB hydrolase superfamily. MetX family. In terms of assembly, homodimer.

It localises to the cytoplasm. The catalysed reaction is L-homoserine + succinyl-CoA = O-succinyl-L-homoserine + CoA. It functions in the pathway amino-acid biosynthesis; L-methionine biosynthesis via de novo pathway; O-succinyl-L-homoserine from L-homoserine: step 1/1. Transfers a succinyl group from succinyl-CoA to L-homoserine, forming succinyl-L-homoserine. This Neisseria meningitidis serogroup A / serotype 4A (strain DSM 15465 / Z2491) protein is Homoserine O-succinyltransferase.